The following is an 860-amino-acid chain: Leucine--tRNA ligase (860 aa).

Residues 42 to 52 carry the 'HIGH' region motif; that stretch reads PYPSGRLHMGH. The short motif at 619–623 is the 'KMSKS' region element; it reads KMSKS. K622 lines the ATP pocket.

The protein belongs to the class-I aminoacyl-tRNA synthetase family.

The protein localises to the cytoplasm. It catalyses the reaction tRNA(Leu) + L-leucine + ATP = L-leucyl-tRNA(Leu) + AMP + diphosphate. The protein is Leucine--tRNA ligase of Citrobacter koseri (strain ATCC BAA-895 / CDC 4225-83 / SGSC4696).